The sequence spans 215 residues: Probable transaldolase (215 aa).

Lys-83 (schiff-base intermediate with substrate) is an active-site residue.

Belongs to the transaldolase family. Type 3B subfamily.

The protein localises to the cytoplasm. The enzyme catalyses D-sedoheptulose 7-phosphate + D-glyceraldehyde 3-phosphate = D-erythrose 4-phosphate + beta-D-fructose 6-phosphate. It functions in the pathway carbohydrate degradation; pentose phosphate pathway; D-glyceraldehyde 3-phosphate and beta-D-fructose 6-phosphate from D-ribose 5-phosphate and D-xylulose 5-phosphate (non-oxidative stage): step 2/3. In terms of biological role, transaldolase is important for the balance of metabolites in the pentose-phosphate pathway. This chain is Probable transaldolase, found in Clostridium perfringens (strain ATCC 13124 / DSM 756 / JCM 1290 / NCIMB 6125 / NCTC 8237 / Type A).